The chain runs to 387 residues: Acetylserotonin O-methyltransferase (387 aa).

S-adenosyl-L-methionine-binding positions include Tyr-153, Trp-170, Glu-216, 246 to 248 (GDF), and Arg-263. The active-site Proton donor/acceptor is His-266. Residues Asp-267 and Gln-317 each contribute to the substrate site. The disordered stretch occupies residues 355–387 (ARGGGAGARSDGGGGEATSQTGSGTGREVGAQD). Residues 356–370 (RGGGAGARSDGGGGE) show a composition bias toward gly residues.

It belongs to the class I-like SAM-binding methyltransferase superfamily. Cation-independent O-methyltransferase family. Homodimer.

It catalyses the reaction N-acetylserotonin + S-adenosyl-L-methionine = melatonin + S-adenosyl-L-homocysteine + H(+). Its pathway is aromatic compound metabolism; melatonin biosynthesis; melatonin from serotonin: step 1/2. Catalyzes the transfer of a methyl group onto N-acetylserotonin, producing melatonin (N-acetyl-5-methoxytryptamine). The protein is Acetylserotonin O-methyltransferase (Asmt) of Mus musculus molossinus (Japanese house mouse).